The chain runs to 309 residues: Glutaminase (309 aa).

Substrate is bound by residues Ser-65, Asn-117, Glu-162, Asn-169, Tyr-193, Tyr-245, and Val-263.

It belongs to the glutaminase family. In terms of assembly, homotetramer.

The enzyme catalyses L-glutamine + H2O = L-glutamate + NH4(+). This chain is Glutaminase, found in Bacillus mycoides (strain KBAB4) (Bacillus weihenstephanensis).